Reading from the N-terminus, the 369-residue chain is 4-hydroxy-3-methylbut-2-en-1-yl diphosphate synthase (flavodoxin) (369 aa).

[4Fe-4S] cluster contacts are provided by cysteine 270, cysteine 273, cysteine 305, and glutamate 312.

It belongs to the IspG family. [4Fe-4S] cluster serves as cofactor.

The enzyme catalyses (2E)-4-hydroxy-3-methylbut-2-enyl diphosphate + oxidized [flavodoxin] + H2O + 2 H(+) = 2-C-methyl-D-erythritol 2,4-cyclic diphosphate + reduced [flavodoxin]. It functions in the pathway isoprenoid biosynthesis; isopentenyl diphosphate biosynthesis via DXP pathway; isopentenyl diphosphate from 1-deoxy-D-xylulose 5-phosphate: step 5/6. Its function is as follows. Converts 2C-methyl-D-erythritol 2,4-cyclodiphosphate (ME-2,4cPP) into 1-hydroxy-2-methyl-2-(E)-butenyl 4-diphosphate. The polypeptide is 4-hydroxy-3-methylbut-2-en-1-yl diphosphate synthase (flavodoxin) (Pseudomonas syringae pv. syringae (strain B728a)).